The primary structure comprises 409 residues: tRNA(Met) cytidine acetate ligase (409 aa).

Residues 7 to 20 (VVEYNPMHNGHLYH), G102, N169, and R194 each bind ATP.

The protein belongs to the TmcAL family.

The protein resides in the cytoplasm. It carries out the reaction cytidine(34) in elongator tRNA(Met) + acetate + ATP = N(4)-acetylcytidine(34) in elongator tRNA(Met) + AMP + diphosphate. Its function is as follows. Catalyzes the formation of N(4)-acetylcytidine (ac(4)C) at the wobble position of elongator tRNA(Met), using acetate and ATP as substrates. First activates an acetate ion to form acetyladenylate (Ac-AMP) and then transfers the acetyl group to tRNA to form ac(4)C34. This is tRNA(Met) cytidine acetate ligase from Clostridium botulinum (strain Kyoto / Type A2).